Here is a 145-residue protein sequence, read N- to C-terminus: Basic phospholipase A2 BFPA (145 aa).

The first 27 residues, 1–27, serve as a signal peptide directing secretion; that stretch reads MNPAHLLVLLAVCVSLLGAANIPPQSL. Intrachain disulfides connect Cys38-Cys97, Cys52-Cys144, Cys54-Cys70, Cys69-Cys125, Cys76-Cys118, Cys86-Cys111, and Cys104-Cys116. Positions 53, 55, and 57 each coordinate Ca(2+). His73 is an active-site residue. Asp74 is a Ca(2+) binding site. Asp119 is a catalytic residue.

Belongs to the phospholipase A2 family. Group I subfamily. D49 sub-subfamily. As to quaternary structure, homodimer; disulfide-linked. The cofactor is Ca(2+). Expressed by the venom gland.

The protein localises to the secreted. It catalyses the reaction a 1,2-diacyl-sn-glycero-3-phosphocholine + H2O = a 1-acyl-sn-glycero-3-phosphocholine + a fatty acid + H(+). Functionally, snake venom phospholipase A2 (PLA2) that inhibits blood coagulation and shows bactericidal activities against both Gram-negative and -positive bacteria (E.coli, MIC=0.4 uM and S.aureus, MIC=0.1 uM). PLA2 catalyzes the calcium-dependent hydrolysis of the 2-acyl groups in 3-sn-phosphoglycerides. In Bungarus fasciatus (Banded krait), this protein is Basic phospholipase A2 BFPA.